The primary structure comprises 103 residues: Pyrimidine/purine nucleoside phosphorylase (103 aa).

The protein belongs to the nucleoside phosphorylase PpnP family.

It catalyses the reaction a purine D-ribonucleoside + phosphate = a purine nucleobase + alpha-D-ribose 1-phosphate. The enzyme catalyses adenosine + phosphate = alpha-D-ribose 1-phosphate + adenine. It carries out the reaction cytidine + phosphate = cytosine + alpha-D-ribose 1-phosphate. The catalysed reaction is guanosine + phosphate = alpha-D-ribose 1-phosphate + guanine. It catalyses the reaction inosine + phosphate = alpha-D-ribose 1-phosphate + hypoxanthine. The enzyme catalyses thymidine + phosphate = 2-deoxy-alpha-D-ribose 1-phosphate + thymine. It carries out the reaction uridine + phosphate = alpha-D-ribose 1-phosphate + uracil. The catalysed reaction is xanthosine + phosphate = alpha-D-ribose 1-phosphate + xanthine. In terms of biological role, catalyzes the phosphorolysis of diverse nucleosides, yielding D-ribose 1-phosphate and the respective free bases. Can use uridine, adenosine, guanosine, cytidine, thymidine, inosine and xanthosine as substrates. Also catalyzes the reverse reactions. The sequence is that of Pyrimidine/purine nucleoside phosphorylase from Shewanella denitrificans (strain OS217 / ATCC BAA-1090 / DSM 15013).